The sequence spans 138 residues: Small ribosomal subunit protein uS11 (138 aa).

Low complexity predominate over residues 1–12; that stretch reads MAQAKKGGTAAK. 2 disordered regions span residues 1 to 32 and 119 to 138; these read MAQA…AAHI and ISDV…RRRV. Over residues 13 to 22 the composition is skewed to basic residues; the sequence is KGQKTRRREK.

Belongs to the universal ribosomal protein uS11 family. In terms of assembly, part of the 30S ribosomal subunit. Interacts with proteins S7 and S18. Binds to IF-3.

Functionally, located on the platform of the 30S subunit, it bridges several disparate RNA helices of the 16S rRNA. Forms part of the Shine-Dalgarno cleft in the 70S ribosome. The sequence is that of Small ribosomal subunit protein uS11 from Mycolicibacterium smegmatis (strain ATCC 700084 / mc(2)155) (Mycobacterium smegmatis).